The chain runs to 385 residues: Chaperone protein DnaJ (385 aa).

One can recognise a J domain in the interval 5 to 70 (DYYEVLGVAK…QKRAAYDRFG (66 aa)). Residues 141 to 219 (GKTETIRIPT…CSGAGRVNRE (79 aa)) form a CR-type zinc finger. Zn(2+) contacts are provided by Cys-154, Cys-157, Cys-171, Cys-174, Cys-193, Cys-196, Cys-207, and Cys-210. CXXCXGXG motif repeat units lie at residues 154–161 (CETCSGTG), 171–178 (CSTCGGYG), 193–200 (CPNCHGRG), and 207–214 (CTACSGAG).

The protein belongs to the DnaJ family. As to quaternary structure, homodimer. Zn(2+) is required as a cofactor.

The protein resides in the cytoplasm. Its function is as follows. Participates actively in the response to hyperosmotic and heat shock by preventing the aggregation of stress-denatured proteins and by disaggregating proteins, also in an autonomous, DnaK-independent fashion. Unfolded proteins bind initially to DnaJ; upon interaction with the DnaJ-bound protein, DnaK hydrolyzes its bound ATP, resulting in the formation of a stable complex. GrpE releases ADP from DnaK; ATP binding to DnaK triggers the release of the substrate protein, thus completing the reaction cycle. Several rounds of ATP-dependent interactions between DnaJ, DnaK and GrpE are required for fully efficient folding. Also involved, together with DnaK and GrpE, in the DNA replication of plasmids through activation of initiation proteins. This is Chaperone protein DnaJ from Methylorubrum extorquens (strain PA1) (Methylobacterium extorquens).